We begin with the raw amino-acid sequence, 236 residues long: MHQRNHHSILLTLLLYLQSIVALARIIDPEFGTYSNPNPRKYPQCQANDLVKLSSCCNELLHKLDQCKSDDLACECCALQSIDRDCYHLCPGNPSTNFLTVLLQDCAQLSEINACALPFKKTDDLLVDKKKGTPNSKSAVQALEADEKYDASLKSKVHNKVDEIKSHVKQDQFLKKKIKLLIDKDETFAIQNHSNNSNNTISAKSESGSVCLTSSYLNSPIIILCAILTGTLFAMY.

Residues 1-24 (MHQRNHHSILLTLLLYLQSIVALA) form the signal peptide. Asn-192, Asn-195, and Asn-198 each carry an N-linked (GlcNAc...) asparagine glycan. Gly-208 carries the GPI-anchor amidated glycine lipid modification. Residues 209–236 (SVCLTSSYLNSPIIILCAILTGTLFAMY) constitute a propeptide, removed in mature form.

The protein resides in the cell membrane. This is Predicted GPI-anchored protein 43 (PGA43) from Candida albicans (strain SC5314 / ATCC MYA-2876) (Yeast).